Consider the following 338-residue polypeptide: DNA-directed RNA polymerase subunit alpha (338 aa).

Residues methionine 1 to glutamate 10 are compositionally biased toward polar residues. A disordered region spans residues methionine 1 to lysine 24. An alpha N-terminal domain (alpha-NTD) region spans residues methionine 1–glutamate 234. Residues phenylalanine 250–tyrosine 338 form an alpha C-terminal domain (alpha-CTD) region.

This sequence belongs to the RNA polymerase alpha chain family. Homodimer. The RNAP catalytic core consists of 2 alpha, 1 beta, 1 beta' and 1 omega subunit. When a sigma factor is associated with the core the holoenzyme is formed, which can initiate transcription.

The enzyme catalyses RNA(n) + a ribonucleoside 5'-triphosphate = RNA(n+1) + diphosphate. DNA-dependent RNA polymerase catalyzes the transcription of DNA into RNA using the four ribonucleoside triphosphates as substrates. In Rhodospirillum centenum (strain ATCC 51521 / SW), this protein is DNA-directed RNA polymerase subunit alpha.